We begin with the raw amino-acid sequence, 118 residues long: Small ribosomal subunit protein uS13 (118 aa).

The interval 93–118 is disordered; it reads RSLPVRGQRSKTNARTRKGPRKPIKK.

This sequence belongs to the universal ribosomal protein uS13 family. In terms of assembly, part of the 30S ribosomal subunit. Forms a loose heterodimer with protein S19. Forms two bridges to the 50S subunit in the 70S ribosome.

Its function is as follows. Located at the top of the head of the 30S subunit, it contacts several helices of the 16S rRNA. In the 70S ribosome it contacts the 23S rRNA (bridge B1a) and protein L5 of the 50S subunit (bridge B1b), connecting the 2 subunits; these bridges are implicated in subunit movement. Contacts the tRNAs in the A and P-sites. In Teredinibacter turnerae (strain ATCC 39867 / T7901), this protein is Small ribosomal subunit protein uS13.